Here is a 501-residue protein sequence, read N- to C-terminus: Solute carrier family 2, facilitated glucose transporter member 5 (501 aa).

N-acetylmethionine is present on Met1. Residues 1–18 (MEPQDPVKREGRLTPVIV) are Cytoplasmic-facing. Residues 19-39 (LATLIAAFGSSFQYGYNVATI) form a helical membrane-spanning segment. Tyr32 lines the D-fructose pocket. At 40–68 (NSPSEFMKDFYNYTYYDRVGEYMNEFYLT) the chain is on the extracellular side. A glycan (N-linked (GlcNAc...) asparagine) is linked at Asn51. Residues 69–91 (LLWSVTVSMFPFGGFLGSLMVGP) traverse the membrane as a helical segment. Over 92 to 98 (LVNNLGR) the chain is Cytoplasmic. A helical transmembrane segment spans residues 99-119 (KGTLLFNNIFSIVPALLMGFS). At 120–126 (DLAKSFE) the chain is on the extracellular side. The chain crosses the membrane as a helical span at residues 127 to 149 (MIIVARVLVGICAGLSSNVVPMY). The Cytoplasmic segment spans residues 150-161 (LGELAPKNWRGA). Residues 162-182 (LGVVPQLFITIGILVAQIFGL) form a helical membrane-spanning segment. Gln167 contributes to the D-fructose binding site. Residues 183–192 (RSLLANEEGW) lie on the Extracellular side of the membrane. The chain crosses the membrane as a helical span at residues 193–213 (PILLGLTGIPAVLQLLFLPFF). The Cytoplasmic segment spans residues 214 to 277 (PESPRYLLIQ…LFKMRSLRWQ (64 aa)). Residues 278–298 (VISIIVLMAGQQLSGVNAIYY) form a helical membrane-spanning segment. Residues Gln288 and 296–298 (IYY) contribute to the D-fructose site. The Extracellular segment spans residues 299-313 (YADQIYLSAGVKEDD). The helical transmembrane segment at 314-334 (VQYVTAGTGAVNVLITVCAIF) threads the bilayer. Residues 335–342 (VVELMGRR) lie on the Cytoplasmic side of the membrane. The helical transmembrane segment at 343–363 (FLLLLGFSVCFTACCVLTGAL) threads the bilayer. At 364–371 (AMQDVISW) the chain is on the extracellular side. Residues 372-394 (MPYVSIACVISYVIGHALGPSPI) form a helical membrane-spanning segment. His387 contacts D-fructose. Over 395–412 (PALLVTEIFLQSSRPAAY) the chain is Cytoplasmic. A helical transmembrane segment spans residues 413-433 (MVAGTVHWLSNFTVGLVFPFI). 419–420 (HW) contributes to the D-fructose binding site. The Extracellular segment spans residues 434-439 (QVGLGA). A helical membrane pass occupies residues 440–460 (YSFVIFAVICFLTTVYIFLII). Residues 461–501 (PETKSKTFIEINQIFIKMNKVPGVHPEKEELKEFPPSTARQ) lie on the Cytoplasmic side of the membrane.

This sequence belongs to the major facilitator superfamily. Sugar transporter (TC 2.A.1.1) family. Glucose transporter subfamily.

It localises to the apical cell membrane. The protein localises to the cell membrane. Its subcellular location is the sarcolemma. The enzyme catalyses D-fructose(out) = D-fructose(in). In terms of biological role, functions as a fructose transporter that has only low activity with other monosaccharides. Can mediate the uptake of deoxyglucose, but with low efficiency. Essential for fructose uptake in the small intestine. Plays a role in the regulation of salt uptake and blood pressure in response to dietary fructose. Required for the development of high blood pressure in response to high dietary fructose intake. The protein is Solute carrier family 2, facilitated glucose transporter member 5 of Ovis aries (Sheep).